The primary structure comprises 252 residues: ATP synthase subunit a (252 aa).

6 helical membrane-spanning segments follow: residues 29-49 (FTNV…FLFI), 87-107 (FFPL…IGLF), 116-136 (QIMI…GYGF), 146-166 (LFVP…IEVI), 183-205 (MLAG…ELGI), and 219-239 (VAIT…FTVL).

Belongs to the ATPase A chain family. In terms of assembly, F-type ATPases have 2 components, CF(1) - the catalytic core - and CF(0) - the membrane proton channel. CF(1) has five subunits: alpha(3), beta(3), gamma(1), delta(1), epsilon(1). CF(0) has three main subunits: a(1), b(2) and c(9-12). The alpha and beta chains form an alternating ring which encloses part of the gamma chain. CF(1) is attached to CF(0) by a central stalk formed by the gamma and epsilon chains, while a peripheral stalk is formed by the delta and b chains.

The protein resides in the cell inner membrane. In terms of biological role, key component of the proton channel; it plays a direct role in the translocation of protons across the membrane. The protein is ATP synthase subunit a of Bartonella quintana (strain Toulouse) (Rochalimaea quintana).